The sequence spans 551 residues: MSRNFHIFFLLVSIIQVGNSADSSEITHKPAGIYVRLNQKAVDYVADLASDALPAILNNLSPPDIVTDMAKITKLHISNVAKPNLSAKFIDGKGVAYNISLASFRASAYAEISVFVWSYEGDFTAELRELSIESELHFDYNGTTTVNASVCNVTHSELSLVFPPGSSLSALQSEIKGQIVSALRDAVCTTAVEALTFVMAQKPIPPESPNYQKPEAGDPNGFSVAELGASLCQVDTVNGFEDSEQEEGNVETTVAPTPDDDNSTLTTEETQKSYWGVDLSVNHPPTFTDEDMIIGLDGGILFNGWKADSAQQLQILNKTRLDKKMVGILLSEYIPNTLFHHIYMYDLGNFKHRYTPSSLPKILQKLSKAVCSKCYVEVSANLTEQPILQIDAHLGARVQLSGNVSIMFHGREQLHDVLHANTKLHVTLKPTVRHSRIFGDVSLTNVDVNVFDLGLGGPLAAPIEKLFSFVVPRVLWPQVKKRLRFAMNRRGVKLPIFCGVELEHTELDFVDHAVLLNTDFSFDLPLFLAKFKKYLDAKSKINPNLPKYVII.

Residues 1–20 (MSRNFHIFFLLVSIIQVGNS) form the signal peptide. A disulfide bond links Cys151 and Cys232. Positions 241-265 (EDSEQEEGNVETTVAPTPDDDNSTL) are disordered.

This sequence belongs to the BPI/LBP/Plunc superfamily. BPI/LBP family. Interacts with ttr-52. In terms of tissue distribution, expressed in the body wall muscle cells and detected at the basal surface of pharyngeal cells and basal-lateral membranes of the intestine.

The protein localises to the secreted. In terms of biological role, plays a role in the uptake of a range of molecules including phosphatidylserine, lipids and xenobiotic compounds from the intestine to surrounding tissues. Possesses lipid transfer activity. Mediates transport of lipids from intestine to reproductive tract. Binds phosphatidylserine. Plays a role in efficient clearance of cell corpses by mediating phosphatidylserine appearance on phagocytic cells, thus promoting phagocytic engulfment of apoptotic cells. Vital for embryonic development. In Caenorhabditis elegans, this protein is Nose resistant to fluoxetine protein 5.